The following is a 222-amino-acid chain: Cytochrome b6 (222 aa).

Residues 39–59 form a helical membrane-spanning segment; that stretch reads IFYCLGGITLVCFLIQFATGF. Cys42 lines the heme c pocket. Heme b is bound by residues His93 and His107. Helical transmembrane passes span 97 to 117, 123 to 143, and 193 to 213; these read ASMM…TGGF, LTWV…VTGY, and LHTF…FLMI. Positions 194 and 209 each coordinate heme b.

It belongs to the cytochrome b family. PetB subfamily. As to quaternary structure, the 4 large subunits of the cytochrome b6-f complex are cytochrome b6, subunit IV (17 kDa polypeptide, PetD), cytochrome f and the Rieske protein, while the 4 small subunits are PetG, PetL, PetM and PetN. The complex functions as a dimer. The cofactor is heme b. Heme c is required as a cofactor.

Its subcellular location is the cellular thylakoid membrane. Its function is as follows. Component of the cytochrome b6-f complex, which mediates electron transfer between photosystem II (PSII) and photosystem I (PSI), cyclic electron flow around PSI, and state transitions. In Trichodesmium erythraeum (strain IMS101), this protein is Cytochrome b6.